We begin with the raw amino-acid sequence, 209 residues long: MARYKDAVCRLCRREGTKLFLKGPKCFTDKCAIEKRNFAPGQHGKDRKAKIVGYGLQLREKQKTKRMYFAQENQFRNYFEKAAKGQGVTGEMLLQQLERRLDNVVYRLGFASARRQARQLVRHGHIAVNGKKVNIPSYQVSVKDEIAVREGSKEMTLLGQIKELTSHTTVPGWLIVDRDNWKGSVSSLPRRDEIQMPVNEQLIVELYSK.

The S4 RNA-binding domain occupies 99 to 160 (RRLDNVVYRL…GSKEMTLLGQ (62 aa)).

Belongs to the universal ribosomal protein uS4 family. In terms of assembly, part of the 30S ribosomal subunit. Contacts protein S5. The interaction surface between S4 and S5 is involved in control of translational fidelity.

One of the primary rRNA binding proteins, it binds directly to 16S rRNA where it nucleates assembly of the body of the 30S subunit. In terms of biological role, with S5 and S12 plays an important role in translational accuracy. The protein is Small ribosomal subunit protein uS4 of Koribacter versatilis (strain Ellin345).